Reading from the N-terminus, the 185-residue chain is Flavodoxin (185 aa).

The region spanning 4–159 (VLVIYDTRTG…ACRRLGRRLA (156 aa)) is the Flavodoxin-like domain.

This sequence belongs to the flavodoxin family. Requires FMN as cofactor.

Low-potential electron donor to a number of redox enzymes. The protein is Flavodoxin (fldA) of Aquifex aeolicus (strain VF5).